The chain runs to 72 residues: Male-specific sperm protein Mst84Dd (72 aa).

It belongs to the MST(3)CGP family. In terms of tissue distribution, testis.

This Drosophila melanogaster (Fruit fly) protein is Male-specific sperm protein Mst84Dd (Mst84Dd).